The sequence spans 657 residues: Glycogen debranching enzyme (657 aa).

D336 (nucleophile) is an active-site residue. Residue E371 is the Proton donor of the active site. Positions 460-481 (ANGEENRDGTNNNYSNNHGKEG) are disordered.

Belongs to the glycosyl hydrolase 13 family.

It catalyses the reaction Hydrolysis of (1-&gt;6)-alpha-D-glucosidic linkages to branches with degrees of polymerization of three or four glucose residues in limit dextrin.. It functions in the pathway glycan degradation; glycogen degradation. In terms of biological role, removes maltotriose and maltotetraose chains that are attached by 1,6-alpha-linkage to the limit dextrin main chain, generating a debranched limit dextrin. This is Glycogen debranching enzyme from Escherichia coli O157:H7.